A 938-amino-acid polypeptide reads, in one-letter code: Ubiquitin carboxyl-terminal hydrolase Usp2 (938 aa).

6 disordered regions span residues 1–53 (MMLD…KVGA), 91–117 (KVKTTLQPHRRSRAGEDSRNNNYNTSR), 130–254 (FNGN…ISTT), 273–297 (EQNQVQQQEEQPQPSSSKSASHRYP), 360–410 (LSGQ…NLQQ), and 500–610 (KDAT…EKSE). Over residues 22–36 (STTKTSSVVATSASS) the composition is skewed to low complexity. Composition is skewed to low complexity over residues 137-158 (TTTNSTTINNTTSRNTTSNTSN), 167-177 (STTATATSTST), 198-227 (MNGHTNNNNNNTRNSSNINNGGNNNMQRQQ), and 275-289 (NQVQQQEEQPQPSSS). Positions 392-410 (ASRSNHGSQAGGSSSNLQQ) are enriched in polar residues. 2 stretches are compositionally biased toward low complexity: residues 502-555 (ATTA…TARS) and 574-583 (TSRSSIGTSS). Positions 592–610 (HNSDDGYKTASSSRDEKSE) are enriched in basic and acidic residues. A USP domain is found at 613–938 (CGLRNIGNTC…SAYILFYERT (326 aa)). The active-site Nucleophile is Cys622. 4 residues coordinate Zn(2+): Cys765, Cys768, Cys814, and Cys817. The Proton acceptor role is filled by His895.

It belongs to the peptidase C19 family. Interacts (via N-terminus) with imd (via N-terminus). Interacts with Rpt6.

It carries out the reaction Thiol-dependent hydrolysis of ester, thioester, amide, peptide and isopeptide bonds formed by the C-terminal Gly of ubiquitin (a 76-residue protein attached to proteins as an intracellular targeting signal).. Functionally, hydrolase that deubiquitinates polyubiquitinated target proteins. Required for preventing the activation of the Toll signaling cascades under unchallenged conditions. Essential for bodily calcium homeostasis. In terms of biological role, required for preventing the activation of the immune deficiency (Imd) signaling cascade under unchallenged conditions. Regulates the Imd pathway by specifically removing 'Lys-48'-linked ubiquitin from imd. Also promotes imd degradation probably by binding to imd and enhancing its association with the proteasome. The protein is Ubiquitin carboxyl-terminal hydrolase Usp2 of Drosophila melanogaster (Fruit fly).